The sequence spans 579 residues: ATP-dependent lipid A-core flippase (579 aa).

Helical transmembrane passes span phenylalanine 24–methionine 44, leucine 61–glycine 81, leucine 147–phenylalanine 167, and leucine 253–alanine 273. Positions leucine 25–lysine 306 constitute an ABC transmembrane type-1 domain. In terms of domain architecture, ABC transporter spans valine 338–leucine 573. Glycine 372–serine 379 contributes to the ATP binding site.

It belongs to the ABC transporter superfamily. Lipid exporter (TC 3.A.1.106) family. As to quaternary structure, homodimer.

The protein localises to the cell inner membrane. It catalyses the reaction ATP + H2O + lipid A-core oligosaccharideSide 1 = ADP + phosphate + lipid A-core oligosaccharideSide 2.. Its function is as follows. Involved in lipopolysaccharide (LPS) biosynthesis. Translocates lipid A-core from the inner to the outer leaflet of the inner membrane. Transmembrane domains (TMD) form a pore in the inner membrane and the ATP-binding domain (NBD) is responsible for energy generation. This is ATP-dependent lipid A-core flippase from Chromohalobacter salexigens (strain ATCC BAA-138 / DSM 3043 / CIP 106854 / NCIMB 13768 / 1H11).